The following is a 185-amino-acid chain: ATP synthase subunit b 2 (185 aa).

The interval 1 to 26 is disordered; the sequence is MAQGHGDAKGTTAHTEAGGGHKAPFP. The chain crosses the membrane as a helical span at residues 37–57; it reads LVSLAIAFVALYLIVSKIALP.

The protein belongs to the ATPase B chain family. F-type ATPases have 2 components, F(1) - the catalytic core - and F(0) - the membrane proton channel. F(1) has five subunits: alpha(3), beta(3), gamma(1), delta(1), epsilon(1). F(0) has three main subunits: a(1), b(2) and c(10-14). The alpha and beta chains form an alternating ring which encloses part of the gamma chain. F(1) is attached to F(0) by a central stalk formed by the gamma and epsilon chains, while a peripheral stalk is formed by the delta and b chains.

The protein localises to the cell inner membrane. Its function is as follows. F(1)F(0) ATP synthase produces ATP from ADP in the presence of a proton or sodium gradient. F-type ATPases consist of two structural domains, F(1) containing the extramembraneous catalytic core and F(0) containing the membrane proton channel, linked together by a central stalk and a peripheral stalk. During catalysis, ATP synthesis in the catalytic domain of F(1) is coupled via a rotary mechanism of the central stalk subunits to proton translocation. Functionally, component of the F(0) channel, it forms part of the peripheral stalk, linking F(1) to F(0). The b'-subunit is a diverged and duplicated form of b found in plants and photosynthetic bacteria. This Rhodopseudomonas palustris (strain ATCC BAA-98 / CGA009) protein is ATP synthase subunit b 2 (atpF2).